The primary structure comprises 453 residues: MSFDLIIKNGTVILENEARVIDIAVQGGKIAAIGENLGEAKNVLDATGLIVSPGMVDAHTHISEPGRTHWEGYETGTRAAAKGGITTMIEMPLNQLPATVDRETIELKFDAAKGKLTIDAAQLGGLVSYNLDRLHELDEVGVVGFKCFVATCGDRGIDNDFRDVNDWQFYKGAQKLGEMDQTVLVHCENALICDELGEEAKREGRVTAHDYVASRPVFTEVEAIRRVLYLAKAAGCRLHVCHISSPEGVEEVTRARQEGQDVTCESCPHYFVLDTDQFEEIGTLAKCSPPIRDQENQKGMWEKLFNGEIDCLVSDHSPCPPEMKAGNIMQAWGGIAGLQNCMDVMFDEAVQKRGMSLPMFGKLMATNAADIFGLKHKGRIAPGKEADLVFIQPDSSYVLKNEDLEYRHKVSPYVGRTIGARITKTILRGDVIYDIEHGFPVPPKGQFILKHQQ.

The Zn(2+) site is built by H59, H61, K146, H186, H242, and D315. K146 is subject to N6-carboxylysine.

This sequence belongs to the metallo-dependent hydrolases superfamily. Allantoinase family. In terms of assembly, homotetramer. Zn(2+) is required as a cofactor. Post-translationally, carboxylation allows a single lysine to coordinate two zinc ions.

The enzyme catalyses (S)-allantoin + H2O = allantoate + H(+). Its pathway is nitrogen metabolism; (S)-allantoin degradation; allantoate from (S)-allantoin: step 1/1. Catalyzes the conversion of allantoin (5-ureidohydantoin) to allantoic acid by hydrolytic cleavage of the five-member hydantoin ring. The chain is Allantoinase from Salmonella paratyphi B (strain ATCC BAA-1250 / SPB7).